Consider the following 317-residue polypeptide: tRNA pseudouridine synthase B (317 aa).

The Nucleophile role is filled by D47.

This sequence belongs to the pseudouridine synthase TruB family. Type 1 subfamily.

It catalyses the reaction uridine(55) in tRNA = pseudouridine(55) in tRNA. Functionally, responsible for synthesis of pseudouridine from uracil-55 in the psi GC loop of transfer RNAs. This chain is tRNA pseudouridine synthase B, found in Shewanella sp. (strain ANA-3).